The primary structure comprises 270 residues: Thiazole synthase (270 aa).

The active-site Schiff-base intermediate with DXP is Lys-112. Residues Gly-173, 199–200, and 221–222 each bind 1-deoxy-D-xylulose 5-phosphate; these read AG and NS.

It belongs to the ThiG family. Homotetramer. Forms heterodimers with either ThiH or ThiS.

Its subcellular location is the cytoplasm. It catalyses the reaction [ThiS sulfur-carrier protein]-C-terminal-Gly-aminoethanethioate + 2-iminoacetate + 1-deoxy-D-xylulose 5-phosphate = [ThiS sulfur-carrier protein]-C-terminal Gly-Gly + 2-[(2R,5Z)-2-carboxy-4-methylthiazol-5(2H)-ylidene]ethyl phosphate + 2 H2O + H(+). It functions in the pathway cofactor biosynthesis; thiamine diphosphate biosynthesis. Its function is as follows. Catalyzes the rearrangement of 1-deoxy-D-xylulose 5-phosphate (DXP) to produce the thiazole phosphate moiety of thiamine. Sulfur is provided by the thiocarboxylate moiety of the carrier protein ThiS. In vitro, sulfur can be provided by H(2)S. The protein is Thiazole synthase of Pseudomonas entomophila (strain L48).